The following is a 536-amino-acid chain: Lysosomal acid glucosylceramidase (536 aa).

A signal peptide spans 1 to 39 (MEFSSPSREECPKPLSRVSIMAGSLTGLLLLQAVSWASG). Intrachain disulfides connect cysteine 43/cysteine 55 and cysteine 57/cysteine 62. N-linked (GlcNAc...) asparagine glycans are attached at residues asparagine 58, asparagine 98, and asparagine 185. Glutamate 274 acts as the Proton donor in catalysis. Asparagine 309 is a glycosylation site (N-linked (GlcNAc...) asparagine). Glutamate 379 (nucleophile) is an active-site residue. The N-linked (GlcNAc...) asparagine glycan is linked to asparagine 501.

The protein belongs to the glycosyl hydrolase 30 family. As to quaternary structure, interacts with saposin-C. Interacts with SCARB2. Interacts with TCP1. May interacts with SNCA; this interaction may inhibit the glucosylceramidase activity. Interacts with GRN; this interaction prevents aggregation of GBA1-SCARB2 complex via interaction with HSPA1A upon stress.

It is found in the lysosome membrane. The enzyme catalyses a beta-D-glucosyl-(1&lt;-&gt;1')-N-acylsphing-4-enine + H2O = an N-acylsphing-4-enine + D-glucose. The catalysed reaction is a beta-D-galactosyl-(1&lt;-&gt;1')-N-acylsphing-4-enine + H2O = an N-acylsphing-4-enine + D-galactose. It carries out the reaction cholesteryl 3-beta-D-glucoside + H2O = cholesterol + D-glucose. It catalyses the reaction a beta-D-glucosyl-(1&lt;-&gt;1')-N-acylsphing-4-enine + cholesterol = cholesteryl 3-beta-D-glucoside + an N-acylsphing-4-enine. The enzyme catalyses beta-D-glucosyl-N-(9Z-octadecenoyl)-sphing-4E-enine + cholesterol = N-(9Z-octadecenoyl)-sphing-4-enine + cholesteryl 3-beta-D-glucoside. The catalysed reaction is beta-D-glucosyl-(1&lt;-&gt;1')-N-hexadecanoylsphing-4-enine + cholesterol = cholesteryl 3-beta-D-glucoside + N-hexadecanoylsphing-4-enine. It carries out the reaction beta-D-glucosyl-N-octanoylsphing-4E-enine + cholesterol = N-octanoylsphing-4-enine + cholesteryl 3-beta-D-glucoside. It catalyses the reaction beta-D-glucosyl-N-dodecanoylsphing-4-enine + cholesterol = N-dodecanoylsphing-4-enine + cholesteryl 3-beta-D-glucoside. The enzyme catalyses beta-D-glucosyl-(1&lt;-&gt;1)-N-octadecanoylsphing-4-enine + cholesterol = N-octadecanoylsphing-4-enine + cholesteryl 3-beta-D-glucoside. The catalysed reaction is beta-D-glucosyl-(1&lt;-&gt;1')-N-(15Z-tetracosenoyl)-sphing-4-enine + cholesterol = N-(15Z-tetracosenoyl)-sphing-4-enine + cholesteryl 3-beta-D-glucoside. It carries out the reaction a beta-D-galactosyl-(1&lt;-&gt;1')-N-acylsphing-4-enine + cholesterol = cholesteryl 3-beta-D-galactoside + an N-acylsphing-4-enine. It catalyses the reaction 1-(beta-D-galactosyl)-N-dodecanoylsphing-4-enine + cholesterol = cholesteryl 3-beta-D-galactoside + N-dodecanoylsphing-4-enine. The enzyme catalyses a beta-D-xylosyl-(1&lt;-&gt;1')-N-acylsphing-4-enine + cholesterol = cholesteryl 3-beta-D-xyloside + an N-acylsphing-4-enine. The catalysed reaction is beta-D-xylosyl-(1&lt;-&gt;1')-N-(9Z-octadecenoyl)-sphing-4-enine + cholesterol = cholesteryl 3-beta-D-xyloside + N-(9Z-octadecenoyl)-sphing-4-enine. It functions in the pathway steroid metabolism; cholesterol metabolism. It participates in sphingolipid metabolism. With respect to regulation, synergistically activated by saposin-A and saposin-C, two saposin peptides produced by proteolytic processing of prosaposin/PSAP. Saposin-C activates GBA1 through its recruitment to membranes. The membrane structure and composition in anionic phospholipids are also important for the activation. Activated by PKC in the salvage pathway of ceramide formation. Inhibited by conduritol B epoxide/CBE. Its function is as follows. Glucosylceramidase that catalyzes, within the lysosomal compartment, the hydrolysis of glucosylceramides/GlcCers (such as beta-D-glucosyl-(1&lt;-&gt;1')-N-acylsphing-4-enine) into free ceramides (such as N-acylsphing-4-enine) and glucose. Plays a central role in the degradation of complex lipids and the turnover of cellular membranes. Through the production of ceramides, participates in the PKC-activated salvage pathway of ceramide formation. Catalyzes the glucosylation of cholesterol, through a transglucosylation reaction where glucose is transferred from GlcCer to cholesterol. GlcCer containing mono-unsaturated fatty acids (such as beta-D-glucosyl-N-(9Z-octadecenoyl)-sphing-4-enine) are preferred as glucose donors for cholesterol glucosylation when compared with GlcCer containing same chain length of saturated fatty acids (such as beta-D-glucosyl-N-octadecanoyl-sphing-4-enine). Under specific conditions, may alternatively catalyze the reverse reaction, transferring glucose from cholesteryl 3-beta-D-glucoside to ceramide. Can also hydrolyze cholesteryl 3-beta-D-glucoside producing glucose and cholesterol. Catalyzes the hydrolysis of galactosylceramides/GalCers (such as beta-D-galactosyl-(1&lt;-&gt;1')-N-acylsphing-4-enine), as well as the transfer of galactose between GalCers and cholesterol in vitro, but with lower activity than with GlcCers. Contrary to GlcCer and GalCer, xylosylceramide/XylCer (such as beta-D-xyosyl-(1&lt;-&gt;1')-N-acylsphing-4-enine) is not a good substrate for hydrolysis, however it is a good xylose donor for transxylosylation activity to form cholesteryl 3-beta-D-xyloside. This is Lysosomal acid glucosylceramidase from Homo sapiens (Human).